The sequence spans 306 residues: Methionyl-tRNA formyltransferase (306 aa).

108–111 (SLLP) serves as a coordination point for (6S)-5,6,7,8-tetrahydrofolate.

This sequence belongs to the Fmt family.

The catalysed reaction is L-methionyl-tRNA(fMet) + (6R)-10-formyltetrahydrofolate = N-formyl-L-methionyl-tRNA(fMet) + (6S)-5,6,7,8-tetrahydrofolate + H(+). Attaches a formyl group to the free amino group of methionyl-tRNA(fMet). The formyl group appears to play a dual role in the initiator identity of N-formylmethionyl-tRNA by promoting its recognition by IF2 and preventing the misappropriation of this tRNA by the elongation apparatus. This is Methionyl-tRNA formyltransferase from Pseudarthrobacter chlorophenolicus (strain ATCC 700700 / DSM 12829 / CIP 107037 / JCM 12360 / KCTC 9906 / NCIMB 13794 / A6) (Arthrobacter chlorophenolicus).